The sequence spans 175 residues: MLNLIADQAWNPFAPFGVTSWEPFVANLIAFILMVVILRYLAFKPIQNVLEKRRQRIEEGEEMREESERQLASVKEQTHEMLVEAGEKGQEKIDAAKAAAARLLEEQEAEASRKAEEIIKKARQLAELEQQKEREALKEQFGQLVALAAAQVTGKMLTEEDQRRINREAIDSLDS.

Residues 18–38 (VTSWEPFVANLIAFILMVVIL) form a helical membrane-spanning segment.

The protein belongs to the ATPase B chain family. F-type ATPases have 2 components, F(1) - the catalytic core - and F(0) - the membrane proton channel. F(1) has five subunits: alpha(3), beta(3), gamma(1), delta(1), epsilon(1). F(0) has three main subunits: a(1), b(2) and c(10-14). The alpha and beta chains form an alternating ring which encloses part of the gamma chain. F(1) is attached to F(0) by a central stalk formed by the gamma and epsilon chains, while a peripheral stalk is formed by the delta and b chains.

It localises to the cell inner membrane. F(1)F(0) ATP synthase produces ATP from ADP in the presence of a proton or sodium gradient. F-type ATPases consist of two structural domains, F(1) containing the extramembraneous catalytic core and F(0) containing the membrane proton channel, linked together by a central stalk and a peripheral stalk. During catalysis, ATP synthesis in the catalytic domain of F(1) is coupled via a rotary mechanism of the central stalk subunits to proton translocation. Its function is as follows. Component of the F(0) channel, it forms part of the peripheral stalk, linking F(1) to F(0). The chain is ATP synthase subunit b from Akkermansia muciniphila (strain ATCC BAA-835 / DSM 22959 / JCM 33894 / BCRC 81048 / CCUG 64013 / CIP 107961 / Muc).